The sequence spans 364 residues: Chorismate synthase (364 aa).

Arginine 47 lines the NADP(+) pocket. Residues 124 to 126 (RAS), glycine 287, 302 to 306 (KPTAT), and arginine 328 contribute to the FMN site.

It belongs to the chorismate synthase family. In terms of assembly, homotetramer. FMNH2 serves as cofactor.

It catalyses the reaction 5-O-(1-carboxyvinyl)-3-phosphoshikimate = chorismate + phosphate. It functions in the pathway metabolic intermediate biosynthesis; chorismate biosynthesis; chorismate from D-erythrose 4-phosphate and phosphoenolpyruvate: step 7/7. Its function is as follows. Catalyzes the anti-1,4-elimination of the C-3 phosphate and the C-6 proR hydrogen from 5-enolpyruvylshikimate-3-phosphate (EPSP) to yield chorismate, which is the branch point compound that serves as the starting substrate for the three terminal pathways of aromatic amino acid biosynthesis. This reaction introduces a second double bond into the aromatic ring system. The sequence is that of Chorismate synthase from Prochlorococcus marinus subsp. pastoris (strain CCMP1986 / NIES-2087 / MED4).